The sequence spans 302 residues: Beta-1,2-mannobiose phosphorylase (302 aa).

It belongs to the glycosyl hydrolase 130 family. In terms of assembly, monomer.

The catalysed reaction is beta-D-mannopyranosyl-(1-&gt;2)-D-mannopyranose + phosphate = alpha-D-mannose 1-phosphate + D-mannose. It participates in nucleotide-sugar biosynthesis; GDP-alpha-D-mannose biosynthesis. Functionally, probably involved in a salvage pathway for GDP-D-mannose biosynthesis. Catalyzes the reversible phosphorolysis of 1,2-beta-oligomannan. In phosphorolytic reactions, prefers beta-1,2-mannobiose (beta-1,2-Man2) as substrate. Produces alpha-D-mannose 1-phosphate, which is the precursor of GDP-D-mannose. The chain is Beta-1,2-mannobiose phosphorylase from Thermoanaerobacter sp. (strain X514).